The following is a 427-amino-acid chain: Glutamate-1-semialdehyde 2,1-aminomutase (427 aa).

K265 bears the N6-(pyridoxal phosphate)lysine mark.

This sequence belongs to the class-III pyridoxal-phosphate-dependent aminotransferase family. HemL subfamily. As to quaternary structure, homodimer. Pyridoxal 5'-phosphate serves as cofactor.

The protein resides in the cytoplasm. It carries out the reaction (S)-4-amino-5-oxopentanoate = 5-aminolevulinate. Its pathway is porphyrin-containing compound metabolism; protoporphyrin-IX biosynthesis; 5-aminolevulinate from L-glutamyl-tRNA(Glu): step 2/2. This is Glutamate-1-semialdehyde 2,1-aminomutase from Paraburkholderia phytofirmans (strain DSM 17436 / LMG 22146 / PsJN) (Burkholderia phytofirmans).